The following is an 89-amino-acid chain: Small ribosomal subunit protein bS16 (89 aa).

This sequence belongs to the bacterial ribosomal protein bS16 family.

The chain is Small ribosomal subunit protein bS16 from Geobacillus stearothermophilus (Bacillus stearothermophilus).